Reading from the N-terminus, the 328-residue chain is Ribosomal RNA small subunit methyltransferase H (328 aa).

S-adenosyl-L-methionine-binding positions include 37 to 39 (GGH), Asp57, Phe83, Asp104, and Gln111.

The protein belongs to the methyltransferase superfamily. RsmH family.

The protein localises to the cytoplasm. It catalyses the reaction cytidine(1402) in 16S rRNA + S-adenosyl-L-methionine = N(4)-methylcytidine(1402) in 16S rRNA + S-adenosyl-L-homocysteine + H(+). In terms of biological role, specifically methylates the N4 position of cytidine in position 1402 (C1402) of 16S rRNA. This chain is Ribosomal RNA small subunit methyltransferase H, found in Neisseria meningitidis serogroup A / serotype 4A (strain DSM 15465 / Z2491).